The primary structure comprises 527 residues: Probable feruloyl esterase B (527 aa).

The signal sequence occupies residues 1–19 (MALLRHLLPVLTVGSAVQS). 2 disulfide bridges follow: C31/C76 and C65/C115. 3 N-linked (GlcNAc...) asparagine glycosylation sites follow: N56, N86, and N139. 4 disulfide bridges follow: C188-C442, C257-C274, C283-C292, and C504-C526. S189 acts as the Acyl-ester intermediate in catalysis. Ca(2+)-binding residues include D258, D261, A263, D265, and I267. The N-linked (GlcNAc...) asparagine glycan is linked to N277. N312 and N356 each carry an N-linked (GlcNAc...) asparagine glycan. Residues D401 and H441 each act as charge relay system in the active site.

Belongs to the tannase family.

The protein resides in the secreted. It carries out the reaction feruloyl-polysaccharide + H2O = ferulate + polysaccharide.. Its function is as follows. Involved in degradation of plant cell walls. Hydrolyzes the feruloyl-arabinose ester bond in arabinoxylans as well as the feruloyl-galactose and feruloyl-arabinose ester bonds in pectin. The polypeptide is Probable feruloyl esterase B (faeB) (Emericella nidulans (strain FGSC A4 / ATCC 38163 / CBS 112.46 / NRRL 194 / M139) (Aspergillus nidulans)).